Reading from the N-terminus, the 306-residue chain is MKKLSLLLLVCLSLLGLFACTSKKTADKKLTVVATNSIIADITKNIAGNKVVLHSIVPVGRDPHEYEPLPEDVKKTSQADVIFYNGINLENGGNAWFTKLVKNAHKKTDKDYFAVSDSVKTIYLENAKEKGKEDPHAWLDLKNGIIYAKNIMKRLSEKDPKNKSYYQKNFQAYSAKLEKLHKVAKEKISRIPTEKKMIVTSEGCFKYFSKAYDIPSAYIWEINTEEEGTPNQIKALVKKLRKSRVSALFVESSVDDRPMKTVSKDTGIPIAAKIFTDSVAKKGQAGDSYYAMMKWNIDKIANGLSQ.

The first 19 residues, 1–19, serve as a signal peptide directing secretion; sequence MKKLSLLLLVCLSLLGLFA. A lipid anchor (N-palmitoyl cysteine) is attached at Cys-20. A lipid anchor (S-diacylglycerol cysteine) is attached at Cys-20. Residues His-64, His-136, Glu-202, and Asp-277 each contribute to the a divalent metal cation site.

Belongs to the bacterial solute-binding protein 9 family. Lipoprotein receptor antigen (Lrai) subfamily.

It is found in the cell membrane. Functionally, part of the ATP-binding cassette (ABC) transport system SloABC involved in metal import. Binds a metal with high affinity and specificity and delivers it to the membrane permease for translocation into the cytoplasm. May act as an adhesin which is involved on adherence to extracellular matrix. It is an important factor in pathogenesis and infection. May contribute to the formation and accumulation of dental plaque. The protein is Metal ABC transporter substrate-binding lipoprotein SloC (sloC) of Streptococcus mutans serotype c (strain ATCC 700610 / UA159).